The primary structure comprises 381 residues: L-lactate dehydrogenase (381 aa).

Positions 1–380 (MIISSTNDYR…TRDALVDLSK (380 aa)) constitute an FMN hydroxy acid dehydrogenase domain. Residue tyrosine 24 participates in substrate binding. Residues serine 106 and glutamine 127 each coordinate FMN. A substrate-binding site is contributed by tyrosine 129. An FMN-binding site is contributed by threonine 155. Residue arginine 164 participates in substrate binding. Lysine 251 provides a ligand contact to FMN. Histidine 275 functions as the Proton acceptor in the catalytic mechanism. Residue arginine 278 coordinates substrate. 306 to 330 (DSGIRNGLDIVRMLALGADATMLGR) serves as a coordination point for FMN.

It belongs to the FMN-dependent alpha-hydroxy acid dehydrogenase family. FMN is required as a cofactor.

Its subcellular location is the cell inner membrane. It catalyses the reaction (S)-lactate + A = pyruvate + AH2. In terms of biological role, catalyzes the conversion of L-lactate to pyruvate. Is coupled to the respiratory chain. This is L-lactate dehydrogenase from Actinobacillus pleuropneumoniae serotype 3 (strain JL03).